Consider the following 671-residue polypeptide: DNA ligase (671 aa).

NAD(+)-binding positions include 31–35, 80–81, and glutamate 110; these read DAEYD and SL. The active-site N6-AMP-lysine intermediate is lysine 112. Positions 133, 167, 283, and 307 each coordinate NAD(+). Positions 401, 404, 419, and 424 each coordinate Zn(2+). In terms of domain architecture, BRCT spans 587–671; that stretch reads EEELVFAGKT…YLPDEGGLNE (85 aa).

This sequence belongs to the NAD-dependent DNA ligase family. LigA subfamily. Mg(2+) is required as a cofactor. Mn(2+) serves as cofactor.

The catalysed reaction is NAD(+) + (deoxyribonucleotide)n-3'-hydroxyl + 5'-phospho-(deoxyribonucleotide)m = (deoxyribonucleotide)n+m + AMP + beta-nicotinamide D-nucleotide.. Its function is as follows. DNA ligase that catalyzes the formation of phosphodiester linkages between 5'-phosphoryl and 3'-hydroxyl groups in double-stranded DNA using NAD as a coenzyme and as the energy source for the reaction. It is essential for DNA replication and repair of damaged DNA. The protein is DNA ligase of Listeria monocytogenes serotype 4a (strain HCC23).